We begin with the raw amino-acid sequence, 230 residues long: 3,4-dihydroxy-2-butanone 4-phosphate synthase (230 aa).

D-ribulose 5-phosphate contacts are provided by residues 38–39 (RE), Asp-43, 151–155 (RRGHT), and Glu-175. Glu-39 contacts Mg(2+). Mg(2+) is bound at residue His-154.

It belongs to the DHBP synthase family. In terms of assembly, homodimer. It depends on Mg(2+) as a cofactor. Requires Mn(2+) as cofactor.

It carries out the reaction D-ribulose 5-phosphate = (2S)-2-hydroxy-3-oxobutyl phosphate + formate + H(+). The protein operates within cofactor biosynthesis; riboflavin biosynthesis; 2-hydroxy-3-oxobutyl phosphate from D-ribulose 5-phosphate: step 1/1. Catalyzes the conversion of D-ribulose 5-phosphate to formate and 3,4-dihydroxy-2-butanone 4-phosphate. The polypeptide is 3,4-dihydroxy-2-butanone 4-phosphate synthase (Vibrio harveyi (Beneckea harveyi)).